Consider the following 692-residue polypeptide: MTRTALVTTALPYANGPLHLGHLVGYIQADIWVRARRMSGGKAWFVCADDTHGTPIMLAAEKAGVTPETFIANIQASHERDFAAFGVAFDHYDSTNSAANKALTEQFYLKLEAAGHISRRSVAQFYDPAKGMFLPDRYVKGICPNCGSPDQYGDNCEVCGATYAPTDLKEPRSVISGATPEMRDSEHFFFEVGHFDAFLREWLAGDVALPGVKAKLGEWLNAEGGLRAWDISRDAPYFGFQIPGQPGKYFYVWLDAPIGYLSSFQTLCGRIGEDFEAHLRAGTSTELHHFIGKDIVNFHGLFWPAVLHGTGHRAPTRLHVNGYLTVDGAKMSKSRGTFVMARTFLDAGLEPEALRYYYAAKSGGGVDDLDLNLGDFIARVNADLVGKFVNLASRCAGFISKRFDGQLAAQLPDAAQYQRFVDGLAPIREAYERNDPAAAIRLTMTLADEANRYIDDVKPWVIAKQEGADAQLQAVCSQGLNLFRVLVTALKPVLPATAAQAEAFLAAPVNDWTELAQPLLGHRITDYTPLFTRIDPKKIDAMIDASKDTLQPAAAAAPAAKPAAPAPAPAPAKDEAKSADAPAYIGIDDFAKLDLRIGKVLVCEFVEGSDKLLRFELDAGELGKRQIFSGIRASYGEPEKLVGRSVVFIANLAPRKMRFGLSEGMILSAGFDGGALALLDADSGAQPGMPVR.

The short motif at 12–22 (PYANGPLHLGH) is the 'HIGH' region element. The Zn(2+) site is built by Cys-143, Cys-146, Cys-156, and Cys-159. The 'KMSKS' region motif lies at 330–334 (KMSKS). Lys-333 serves as a coordination point for ATP. A compositionally biased stretch (low complexity) spans 554–563 (AAAAPAAKPA). Residues 554–575 (AAAAPAAKPAAPAPAPAPAKDE) form a disordered region. The 104-residue stretch at 589–692 (DFAKLDLRIG…SGAQPGMPVR (104 aa)) folds into the tRNA-binding domain.

Belongs to the class-I aminoacyl-tRNA synthetase family. MetG type 1 subfamily. Homodimer. Zn(2+) serves as cofactor.

It localises to the cytoplasm. It catalyses the reaction tRNA(Met) + L-methionine + ATP = L-methionyl-tRNA(Met) + AMP + diphosphate. Functionally, is required not only for elongation of protein synthesis but also for the initiation of all mRNA translation through initiator tRNA(fMet) aminoacylation. The protein is Methionine--tRNA ligase of Stenotrophomonas maltophilia (strain K279a).